We begin with the raw amino-acid sequence, 425 residues long: Histidine--tRNA ligase 1 (425 aa).

Belongs to the class-II aminoacyl-tRNA synthetase family. As to quaternary structure, homodimer.

It is found in the cytoplasm. The catalysed reaction is tRNA(His) + L-histidine + ATP = L-histidyl-tRNA(His) + AMP + diphosphate + H(+). The protein is Histidine--tRNA ligase 1 of Bacillus cereus (strain ZK / E33L).